The following is a 232-amino-acid chain: Glycerol-3-phosphate acyltransferase (232 aa).

The next 6 helical transmembrane spans lie at 4-24 (FLAI…IIAG), 56-76 (VVTL…VGFF), 90-110 (IALS…TVFA), 124-144 (MLIG…LLAV), 152-172 (VGSI…KYVF), and 191-211 (SLDY…IYTH).

This sequence belongs to the PlsY family. Probably interacts with PlsX.

Its subcellular location is the cell inner membrane. The catalysed reaction is an acyl phosphate + sn-glycerol 3-phosphate = a 1-acyl-sn-glycero-3-phosphate + phosphate. Its pathway is lipid metabolism; phospholipid metabolism. Functionally, catalyzes the transfer of an acyl group from acyl-phosphate (acyl-PO(4)) to glycerol-3-phosphate (G3P) to form lysophosphatidic acid (LPA). This enzyme utilizes acyl-phosphate as fatty acyl donor, but not acyl-CoA or acyl-ACP. The polypeptide is Glycerol-3-phosphate acyltransferase (Chlorobaculum tepidum (strain ATCC 49652 / DSM 12025 / NBRC 103806 / TLS) (Chlorobium tepidum)).